Here is a 388-residue protein sequence, read N- to C-terminus: Processive diacylglycerol beta-glucosyltransferase (388 aa).

Belongs to the glycosyltransferase 28 family. UgtP subfamily.

It localises to the cell membrane. It carries out the reaction a 1,2-diacyl-3-O-(beta-D-glucopyranosyl)-sn-glycerol + UDP-alpha-D-glucose = a 1,2-diacyl-3-O-(beta-D-Glc-(1-&gt;6)-beta-D-Glc)-sn-glycerol + UDP + H(+). It catalyses the reaction a 1,2-diacyl-3-O-(beta-D-Glc-(1-&gt;6)-beta-D-Glc)-sn-glycerol + UDP-alpha-D-glucose = a 1,2-diacyl-3-O-(beta-D-Glc-(1-&gt;6)-beta-D-Glc-(1-&gt;6)-beta-D-Glc)-sn-glycerol + UDP + H(+). The enzyme catalyses a 1,2-diacyl-sn-glycerol + UDP-alpha-D-glucose = a 1,2-diacyl-3-O-(beta-D-glucopyranosyl)-sn-glycerol + UDP + H(+). It participates in glycolipid metabolism; diglucosyl-diacylglycerol biosynthesis. Processive glucosyltransferase involved in the biosynthesis of both the bilayer- and non-bilayer-forming membrane glucolipids. Is able to successively transfer up to three glucosyl residues to diacylglycerol (DAG), thereby catalyzing the formation of beta-monoglucosyl-DAG (3-O-(beta-D-glucopyranosyl)-1,2-diacyl-sn-glycerol), beta-diglucosyl-DAG (3-O-(beta-D-glucopyranosyl-beta-(1-&gt;6)-D-glucopyranosyl)-1,2-diacyl-sn-glycerol) and beta-triglucosyl-DAG (3-O-(beta-D-glucopyranosyl-beta-(1-&gt;6)-D-glucopyranosyl-beta-(1-&gt;6)-D-glucopyranosyl)-1,2-diacyl-sn-glycerol). Beta-diglucosyl-DAG is the predominant glycolipid found in Bacillales and is also used as a membrane anchor for lipoteichoic acid (LTA). This chain is Processive diacylglycerol beta-glucosyltransferase, found in Bacillus anthracis (strain A0248).